Here is a 371-residue protein sequence, read N- to C-terminus: Chaperone protein DnaJ (371 aa).

The 65-residue stretch at D5–G69 folds into the J domain. The segment at G133 to R215 adopts a CR-type zinc-finger fold. 8 residues coordinate Zn(2+): C146, C149, C163, C166, C189, C192, C203, and C206. CXXCXGXG motif repeat units lie at residues C146–G153, C163–G170, C189–G196, and C203–G210.

It belongs to the DnaJ family. Homodimer. It depends on Zn(2+) as a cofactor.

It localises to the cytoplasm. Its function is as follows. Participates actively in the response to hyperosmotic and heat shock by preventing the aggregation of stress-denatured proteins and by disaggregating proteins, also in an autonomous, DnaK-independent fashion. Unfolded proteins bind initially to DnaJ; upon interaction with the DnaJ-bound protein, DnaK hydrolyzes its bound ATP, resulting in the formation of a stable complex. GrpE releases ADP from DnaK; ATP binding to DnaK triggers the release of the substrate protein, thus completing the reaction cycle. Several rounds of ATP-dependent interactions between DnaJ, DnaK and GrpE are required for fully efficient folding. Also involved, together with DnaK and GrpE, in the DNA replication of plasmids through activation of initiation proteins. This chain is Chaperone protein DnaJ, found in Bacillus cereus (strain 03BB102).